The following is a 128-amino-acid chain: MAREFKRSDRVAQEIQKEIAVILQREVKDPRIGMVTVSDVEVSSDLSYAKIFVTFLFDHDEMAIEQGMKGLEKASPYIRSLLGKAMRLRIVPEIRFIYDQSLVEGMRMSNLVTNVVREDEKKHVEESN.

It belongs to the RbfA family. In terms of assembly, monomer. Binds 30S ribosomal subunits, but not 50S ribosomal subunits or 70S ribosomes.

It localises to the cytoplasm. In terms of biological role, one of several proteins that assist in the late maturation steps of the functional core of the 30S ribosomal subunit. Associates with free 30S ribosomal subunits (but not with 30S subunits that are part of 70S ribosomes or polysomes). Required for efficient processing of 16S rRNA. May interact with the 5'-terminal helix region of 16S rRNA. This Haemophilus influenzae (strain ATCC 51907 / DSM 11121 / KW20 / Rd) protein is Ribosome-binding factor A.